The chain runs to 620 residues: Two-component response regulator ORR27 (620 aa).

In terms of domain architecture, Response regulatory spans 24–138 (HVLVVDDDAA…AIKFIWKHVL (115 aa)). Asp-76 carries the 4-aspartylphosphate modification. Disordered stretches follow at residues 171–197 (PPAV…AELS) and 215–257 (VWSS…LEAT). A DNA-binding region (myb-like GARP) is located at residues 261–321 (KKVRTRFTWT…HLQKYRSWLE (61 aa)). The segment covering 431-456 (SVSRDAHENGNSQARGSAMSNGTSGT) has biased composition (polar residues). 3 disordered regions span residues 431-457 (SVSR…SGTR), 501-523 (SDQN…NSKT), and 596-620 (PPRG…SSGP). Positions 603–620 (EIASHENTNGKNGASSGP) are enriched in polar residues.

The protein belongs to the ARR family. Type-B subfamily. Post-translationally, two-component system major event consists of a His-to-Asp phosphorelay between a sensor histidine kinase (HK) and a response regulator (RR). In plants, the His-to-Asp phosphorelay involves an additional intermediate named Histidine-containing phosphotransfer protein (HPt). This multistep phosphorelay consists of a His-Asp-His-Asp sequential transfer of a phosphate group between first a His and an Asp of the HK protein, followed by the transfer to a conserved His of the HPt protein and finally the transfer to an Asp in the receiver domain of the RR protein.

Its subcellular location is the nucleus. Transcriptional activator that binds specific DNA sequence. Functions as a response regulator involved in His-to-Asp phosphorelay signal transduction system. Phosphorylation of the Asp residue in the receiver domain activates the ability of the protein to promote the transcription of target genes. May directly activate some type-A response regulators in response to cytokinins. In Oryza sativa subsp. japonica (Rice), this protein is Two-component response regulator ORR27.